The primary structure comprises 684 residues: Methionine--tRNA ligase (684 aa).

Positions 15 to 25 (PYANGAIHLGH) match the 'HIGH' region motif. Residues Cys-146, Cys-149, Cys-159, and Cys-162 each coordinate Zn(2+). The short motif at 331-335 (KMSKS) is the 'KMSKS' region element. Residue Lys-334 coordinates ATP. Residues 582–684 (DFAKLDLRVA…SGVTAGMQVR (103 aa)) enclose the tRNA-binding domain.

Belongs to the class-I aminoacyl-tRNA synthetase family. MetG type 1 subfamily. Homodimer. The cofactor is Zn(2+).

It is found in the cytoplasm. It carries out the reaction tRNA(Met) + L-methionine + ATP = L-methionyl-tRNA(Met) + AMP + diphosphate. In terms of biological role, is required not only for elongation of protein synthesis but also for the initiation of all mRNA translation through initiator tRNA(fMet) aminoacylation. The chain is Methionine--tRNA ligase from Glaesserella parasuis serovar 5 (strain SH0165) (Haemophilus parasuis).